The following is a 620-amino-acid chain: 1-deoxy-D-xylulose-5-phosphate synthase (620 aa).

Residues His80 and 121-123 (GHS) each bind thiamine diphosphate. Asp152 contributes to the Mg(2+) binding site. Residues 153–154 (GA), Asn181, Tyr288, and Glu370 each bind thiamine diphosphate. Asn181 provides a ligand contact to Mg(2+).

Belongs to the transketolase family. DXPS subfamily. Homodimer. The cofactor is Mg(2+). Thiamine diphosphate serves as cofactor.

The catalysed reaction is D-glyceraldehyde 3-phosphate + pyruvate + H(+) = 1-deoxy-D-xylulose 5-phosphate + CO2. Its pathway is metabolic intermediate biosynthesis; 1-deoxy-D-xylulose 5-phosphate biosynthesis; 1-deoxy-D-xylulose 5-phosphate from D-glyceraldehyde 3-phosphate and pyruvate: step 1/1. Functionally, catalyzes the acyloin condensation reaction between C atoms 2 and 3 of pyruvate and glyceraldehyde 3-phosphate to yield 1-deoxy-D-xylulose-5-phosphate (DXP). This is 1-deoxy-D-xylulose-5-phosphate synthase from Escherichia coli (strain SMS-3-5 / SECEC).